We begin with the raw amino-acid sequence, 60 residues long: Cytotoxin 2 (60 aa).

4 disulfides stabilise this stretch: cysteine 3/cysteine 21, cysteine 14/cysteine 38, cysteine 42/cysteine 53, and cysteine 54/cysteine 59.

It belongs to the three-finger toxin family. Short-chain subfamily. Type IA cytotoxin sub-subfamily. Monomer, or heterodimer with alpha-cobratoxin (AC P01391); disulfide-linked. As to expression, expressed by the venom gland.

The protein resides in the secreted. It localises to the target cell membrane. Its function is as follows. Monomer: shows cytolytic activity. Heterodimer: has no cytolytic activity, but retains most of the alpha-cobratoxin capacity to compete with alpha-bungarotoxin for binding to Torpedo and alpha-7/CHRNA7 nicotinic acetylcholine receptors (nAChRs) as well as to Lymnea stagnalis acetylcholine-binding protein. The polypeptide is Cytotoxin 2 (Naja kaouthia (Monocled cobra)).